The following is a 93-amino-acid chain: DNA-directed RNA polymerase subunit omega (93 aa).

Belongs to the RNA polymerase subunit omega family. The RNAP catalytic core consists of 2 alpha, 1 beta, 1 beta' and 1 omega subunit. When a sigma factor is associated with the core the holoenzyme is formed, which can initiate transcription.

The enzyme catalyses RNA(n) + a ribonucleoside 5'-triphosphate = RNA(n+1) + diphosphate. In terms of biological role, promotes RNA polymerase assembly. Latches the N- and C-terminal regions of the beta' subunit thereby facilitating its interaction with the beta and alpha subunits. The sequence is that of DNA-directed RNA polymerase subunit omega from Acinetobacter baylyi (strain ATCC 33305 / BD413 / ADP1).